Reading from the N-terminus, the 242-residue chain is ATP synthase subunit a (242 aa).

6 helical membrane passes run 29-49 (SSIY…LAFY), 84-104 (FIPL…LGMT), 114-134 (IIVT…VGFI), 140-160 (FLTL…MIVI), 189-209 (VIAS…IPLM), and 210-230 (VILI…FTIL).

It belongs to the ATPase A chain family. F-type ATPases have 2 components, CF(1) - the catalytic core - and CF(0) - the membrane proton channel. CF(1) has five subunits: alpha(3), beta(3), gamma(1), delta(1), epsilon(1). CF(0) has three main subunits: a(1), b(2) and c(9-12). The alpha and beta chains form an alternating ring which encloses part of the gamma chain. CF(1) is attached to CF(0) by a central stalk formed by the gamma and epsilon chains, while a peripheral stalk is formed by the delta and b chains.

It localises to the cell inner membrane. Key component of the proton channel; it plays a direct role in the translocation of protons across the membrane. The polypeptide is ATP synthase subunit a (Rickettsia prowazekii (strain Madrid E)).